The sequence spans 673 residues: DNA ligase (673 aa).

NAD(+)-binding positions include 33 to 37, 82 to 83, and E113; these read DYEYD and SL. K115 acts as the N6-AMP-lysine intermediate in catalysis. NAD(+) is bound by residues R136, E170, K285, and K309. Residues C403, C406, C421, and C426 each contribute to the Zn(2+) site. The region spanning 583–672 is the BRCT domain; sequence AKSDILKGYT…SHEEVEKILM (90 aa).

This sequence belongs to the NAD-dependent DNA ligase family. LigA subfamily. Mg(2+) serves as cofactor. It depends on Mn(2+) as a cofactor.

It carries out the reaction NAD(+) + (deoxyribonucleotide)n-3'-hydroxyl + 5'-phospho-(deoxyribonucleotide)m = (deoxyribonucleotide)n+m + AMP + beta-nicotinamide D-nucleotide.. In terms of biological role, DNA ligase that catalyzes the formation of phosphodiester linkages between 5'-phosphoryl and 3'-hydroxyl groups in double-stranded DNA using NAD as a coenzyme and as the energy source for the reaction. It is essential for DNA replication and repair of damaged DNA. This chain is DNA ligase, found in Caldicellulosiruptor saccharolyticus (strain ATCC 43494 / DSM 8903 / Tp8T 6331).